Here is a 225-residue protein sequence, read N- to C-terminus: Ribosome maturation factor RimM (225 aa).

Positions Ala-144–Tyr-225 constitute a PRC barrel domain.

This sequence belongs to the RimM family. As to quaternary structure, binds ribosomal protein uS19.

The protein resides in the cytoplasm. In terms of biological role, an accessory protein needed during the final step in the assembly of 30S ribosomal subunit, possibly for assembly of the head region. Essential for efficient processing of 16S rRNA. May be needed both before and after RbfA during the maturation of 16S rRNA. It has affinity for free ribosomal 30S subunits but not for 70S ribosomes. This is Ribosome maturation factor RimM from Burkholderia vietnamiensis (strain G4 / LMG 22486) (Burkholderia cepacia (strain R1808)).